We begin with the raw amino-acid sequence, 109 residues long: Protein reprimo (109 aa).

2 N-linked (GlcNAc...) asparagine glycosylation sites follow: Asn7 and Asn18. Residues 56–76 (VVQIAVMCVLSLTVVFGIFFL) form a helical membrane-spanning segment. Ser98 bears the Phosphoserine mark.

The protein belongs to the reprimo family.

It is found in the cytoplasm. Its subcellular location is the membrane. In terms of biological role, may be involved in the regulation of p53-dependent G2 arrest of the cell cycle. Seems to induce cell cycle arrest by inhibiting CDK1 activity and nuclear translocation of the CDC2 cyclin B1 complex. The chain is Protein reprimo (RPRM) from Bos taurus (Bovine).